A 141-amino-acid chain; its full sequence is Nucleoside diphosphate kinase (141 aa).

The ATP site is built by Lys10, Phe58, Arg86, Thr92, Arg103, and Asn113. The active-site Pros-phosphohistidine intermediate is His116.

Belongs to the NDK family. In terms of assembly, homotetramer. Mg(2+) serves as cofactor.

The protein resides in the cytoplasm. The catalysed reaction is a 2'-deoxyribonucleoside 5'-diphosphate + ATP = a 2'-deoxyribonucleoside 5'-triphosphate + ADP. The enzyme catalyses a ribonucleoside 5'-diphosphate + ATP = a ribonucleoside 5'-triphosphate + ADP. In terms of biological role, major role in the synthesis of nucleoside triphosphates other than ATP. The ATP gamma phosphate is transferred to the NDP beta phosphate via a ping-pong mechanism, using a phosphorylated active-site intermediate. This chain is Nucleoside diphosphate kinase, found in Ehrlichia canis (strain Jake).